The primary structure comprises 344 residues: tRNA N6-adenosine threonylcarbamoyltransferase (344 aa).

Positions 111 and 115 each coordinate Fe cation. Substrate contacts are provided by residues 134–138 (LVSGG), D167, G180, and N272. D300 contributes to the Fe cation binding site.

The protein belongs to the KAE1 / TsaD family. Requires Fe(2+) as cofactor.

It localises to the cytoplasm. The catalysed reaction is L-threonylcarbamoyladenylate + adenosine(37) in tRNA = N(6)-L-threonylcarbamoyladenosine(37) in tRNA + AMP + H(+). Functionally, required for the formation of a threonylcarbamoyl group on adenosine at position 37 (t(6)A37) in tRNAs that read codons beginning with adenine. Is involved in the transfer of the threonylcarbamoyl moiety of threonylcarbamoyl-AMP (TC-AMP) to the N6 group of A37, together with TsaE and TsaB. TsaD likely plays a direct catalytic role in this reaction. The polypeptide is tRNA N6-adenosine threonylcarbamoyltransferase (Idiomarina loihiensis (strain ATCC BAA-735 / DSM 15497 / L2-TR)).